Consider the following 535-residue polypeptide: Interferon lambda receptor 1 (535 aa).

An N-terminal signal peptide occupies residues 1–20 (MWRADRWAPLLLFLLQSALG). At 21–227 (RPRLAPPRNV…FLEAPGDKRA (207 aa)) the chain is on the extracellular side. Positions 26 to 121 (PPRNVTLFSQ…ESRYLEYLFD (96 aa)) constitute a Fibronectin type-III domain. N-linked (GlcNAc...) asparagine glycans are attached at residues asparagine 29, asparagine 36, and asparagine 52. 3 disulfide bridges follow: cysteine 73–cysteine 81, cysteine 85–cysteine 149, and cysteine 194–cysteine 216. An N-linked (GlcNAc...) asparagine glycan is attached at asparagine 141. The chain crosses the membrane as a helical span at residues 228-248 (VLAMPSLLLLLIAAVAAGVAW). At 249 to 535 (KIMKGNPWFQ…GRMLGDYLVR (287 aa)) the chain is on the cytoplasmic side. Disordered regions lie at residues 301-419 (NRPA…APCG) and 478-520 (VNNP…SSVQ). Positions 321–336 (STEDEDEDTDYDDDGD) are enriched in acidic residues. A compositionally biased stretch (basic and acidic residues) spans 350–360 (EKPRVMEHSET). Residues 376 to 396 (GSDGSSAWDSSDRSWSSTGDS) are compositionally biased toward low complexity. The segment covering 397–414 (SYKDEVGSSSCLDRKEPD) has biased composition (basic and acidic residues). The segment covering 482-503 (EGEEEQEDEEEEEEEEEEEDWE) has biased composition (acidic residues).

It belongs to the type II cytokine receptor family. Heterodimer with IL10RB. Post-translationally, ubiquitinated by FBXO45-containing E3 ligase leading to proteasomal degradation.

It is found in the membrane. Functionally, the IFNLR1/IL10RB dimer is a receptor for the cytokine ligands IFNL2 and IFNL3 and mediates their antiviral activity. The ligand/receptor complex stimulate the activation of the JAK/STAT signaling pathway leading to the expression of IFN-stimulated genes (ISG), which contribute to the antiviral state. Determines the cell type specificity of the lambda interferon action. Shows a more restricted pattern of expression in the epithelial tissues thereby limiting responses to lambda interferons primarily to epithelial cells of the respiratory, gastrointestinal, and reproductive tracts. Seems not to be essential for early virus-activated host defense in vaginal infection, but plays an important role in Toll-like receptor (TLR)-induced antiviral defense. Plays a significant role in the antiviral immune defense in the intestinal epithelium. The sequence is that of Interferon lambda receptor 1 (Ifnlr1) from Mus musculus (Mouse).